Reading from the N-terminus, the 691-residue chain is Elongation factor G (691 aa).

Positions 8-283 (KRVRNIGIAA…AVVAYLPAPD (276 aa)) constitute a tr-type G domain. GTP-binding positions include 17-24 (AHIDAGKT), 81-85 (DTPGH), and 135-138 (NKMD).

The protein belongs to the TRAFAC class translation factor GTPase superfamily. Classic translation factor GTPase family. EF-G/EF-2 subfamily.

The protein resides in the cytoplasm. Functionally, catalyzes the GTP-dependent ribosomal translocation step during translation elongation. During this step, the ribosome changes from the pre-translocational (PRE) to the post-translocational (POST) state as the newly formed A-site-bound peptidyl-tRNA and P-site-bound deacylated tRNA move to the P and E sites, respectively. Catalyzes the coordinated movement of the two tRNA molecules, the mRNA and conformational changes in the ribosome. This Campylobacter lari (strain RM2100 / D67 / ATCC BAA-1060) protein is Elongation factor G.